Reading from the N-terminus, the 181-residue chain is Large ribosomal subunit protein uL5 (181 aa).

The protein belongs to the universal ribosomal protein uL5 family. As to quaternary structure, part of the 50S ribosomal subunit; part of the 5S rRNA/L5/L18/L25 subcomplex. Contacts the 5S rRNA and the P site tRNA. Forms a bridge to the 30S subunit in the 70S ribosome.

Functionally, this is one of the proteins that bind and probably mediate the attachment of the 5S RNA into the large ribosomal subunit, where it forms part of the central protuberance. In the 70S ribosome it contacts protein S13 of the 30S subunit (bridge B1b), connecting the 2 subunits; this bridge is implicated in subunit movement. Contacts the P site tRNA; the 5S rRNA and some of its associated proteins might help stabilize positioning of ribosome-bound tRNAs. This is Large ribosomal subunit protein uL5 from Colwellia psychrerythraea (strain 34H / ATCC BAA-681) (Vibrio psychroerythus).